Here is a 351-residue protein sequence, read N- to C-terminus: Protein-glutamate methylesterase/protein-glutamine glutaminase 1 (351 aa).

Residues 1 to 115 (MVDDSAVVRQ…KQFLTESADE (115 aa)) enclose the Response regulatory domain. A 4-aspartylphosphate modification is found at D49. In terms of domain architecture, CheB-type methylesterase spans 161–351 (AQTTERIVAI…MAREIVTQLQ (191 aa)). Residues S173, H199, and D295 contribute to the active site.

It belongs to the CheB family. Post-translationally, phosphorylated by CheA. Phosphorylation of the N-terminal regulatory domain activates the methylesterase activity.

The protein resides in the cytoplasm. It carries out the reaction [protein]-L-glutamate 5-O-methyl ester + H2O = L-glutamyl-[protein] + methanol + H(+). The catalysed reaction is L-glutaminyl-[protein] + H2O = L-glutamyl-[protein] + NH4(+). Its function is as follows. Involved in chemotaxis. Part of a chemotaxis signal transduction system that modulates chemotaxis in response to various stimuli. Catalyzes the demethylation of specific methylglutamate residues introduced into the chemoreceptors (methyl-accepting chemotaxis proteins or MCP) by CheR. Also mediates the irreversible deamidation of specific glutamine residues to glutamic acid. The chain is Protein-glutamate methylesterase/protein-glutamine glutaminase 1 from Xanthomonas oryzae pv. oryzae (strain MAFF 311018).